The primary structure comprises 359 residues: Histidinol-phosphate aminotransferase (359 aa).

An N6-(pyridoxal phosphate)lysine modification is found at Lys-212.

This sequence belongs to the class-II pyridoxal-phosphate-dependent aminotransferase family. Histidinol-phosphate aminotransferase subfamily. Homodimer. Requires pyridoxal 5'-phosphate as cofactor.

It catalyses the reaction L-histidinol phosphate + 2-oxoglutarate = 3-(imidazol-4-yl)-2-oxopropyl phosphate + L-glutamate. It functions in the pathway amino-acid biosynthesis; L-histidine biosynthesis; L-histidine from 5-phospho-alpha-D-ribose 1-diphosphate: step 7/9. The chain is Histidinol-phosphate aminotransferase from Buchnera aphidicola subsp. Schlechtendalia chinensis.